A 185-amino-acid chain; its full sequence is Ribosome-recycling factor (185 aa).

It belongs to the RRF family.

The protein resides in the cytoplasm. Its function is as follows. Responsible for the release of ribosomes from messenger RNA at the termination of protein biosynthesis. May increase the efficiency of translation by recycling ribosomes from one round of translation to another. In Lactococcus lactis subsp. cremoris (strain SK11), this protein is Ribosome-recycling factor.